Reading from the N-terminus, the 663-residue chain is Methionine--tRNA ligase (663 aa).

The 'HIGH' region motif lies at 13–23 (PYTNGPCHLGH). Zn(2+)-binding residues include C144, C147, C156, and C160. The 'KMSKS' region motif lies at 326–330 (KFSKS). Residue K329 participates in ATP binding. The tRNA-binding domain maps to 565-663 (EFGKMKLIVG…QAVEPGTPIR (99 aa)).

The protein belongs to the class-I aminoacyl-tRNA synthetase family. MetG type 1 subfamily. As to quaternary structure, homodimer. The cofactor is Zn(2+).

It is found in the cytoplasm. The catalysed reaction is tRNA(Met) + L-methionine + ATP = L-methionyl-tRNA(Met) + AMP + diphosphate. Functionally, is required not only for elongation of protein synthesis but also for the initiation of all mRNA translation through initiator tRNA(fMet) aminoacylation. This chain is Methionine--tRNA ligase, found in Methanosphaerula palustris (strain ATCC BAA-1556 / DSM 19958 / E1-9c).